The following is a 159-amino-acid chain: Ribosomal RNA large subunit methyltransferase H (159 aa).

S-adenosyl-L-methionine contacts are provided by residues Leu76, Gly108, and 127 to 132 (FSKMTF).

This sequence belongs to the RNA methyltransferase RlmH family. Homodimer.

It is found in the cytoplasm. The enzyme catalyses pseudouridine(1915) in 23S rRNA + S-adenosyl-L-methionine = N(3)-methylpseudouridine(1915) in 23S rRNA + S-adenosyl-L-homocysteine + H(+). In terms of biological role, specifically methylates the pseudouridine at position 1915 (m3Psi1915) in 23S rRNA. This chain is Ribosomal RNA large subunit methyltransferase H, found in Bifidobacterium animalis subsp. lactis (strain AD011).